Reading from the N-terminus, the 307-residue chain is GTPase Era (307 aa).

Positions 7 to 181 constitute an Era-type G domain; the sequence is RCGWVALMGP…VELIRKKLPK (175 aa). A G1 region spans residues 15-22; the sequence is GPPNAGKS. Position 15–22 (15–22) interacts with GTP; sequence GPPNAGKS. Residues 41 to 45 are G2; the sequence is QTTRN. Residues 62-65 form a G3 region; it reads DTPG. Residues 62–66 and 130–133 contribute to the GTP site; these read DTPGL and NKVD. The G4 stretch occupies residues 130–133; it reads NKVD. A G5 region spans residues 160-162; it reads ISA. Residues 212 to 290 form the KH type-2 domain; sequence LRQEVPYSVA…HLELWVKVRE (79 aa).

This sequence belongs to the TRAFAC class TrmE-Era-EngA-EngB-Septin-like GTPase superfamily. Era GTPase family. Monomer.

The protein localises to the cytoplasm. It is found in the cell inner membrane. Its function is as follows. An essential GTPase that binds both GDP and GTP, with rapid nucleotide exchange. Plays a role in 16S rRNA processing and 30S ribosomal subunit biogenesis and possibly also in cell cycle regulation and energy metabolism. The sequence is that of GTPase Era from Desulfovibrio desulfuricans (strain ATCC 27774 / DSM 6949 / MB).